The primary structure comprises 495 residues: UDP-N-acetylmuramoyl-L-alanyl-D-glutamate--2,6-diaminopimelate ligase (495 aa).

UDP-N-acetyl-alpha-D-muramoyl-L-alanyl-D-glutamate is bound by residues L27, S29, and H44 to A46. G116–T122 is an ATP binding site. Residues N157, T158–T159, S185, Q191, and R193 contribute to the UDP-N-acetyl-alpha-D-muramoyl-L-alanyl-D-glutamate site. At K225 the chain carries N6-carboxylysine. Meso-2,6-diaminopimelate contacts are provided by residues R390, D414–R417, G465, and E469. Residues D414–R417 carry the Meso-diaminopimelate recognition motif motif.

Belongs to the MurCDEF family. MurE subfamily. Mg(2+) is required as a cofactor. Carboxylation is probably crucial for Mg(2+) binding and, consequently, for the gamma-phosphate positioning of ATP.

It localises to the cytoplasm. The catalysed reaction is UDP-N-acetyl-alpha-D-muramoyl-L-alanyl-D-glutamate + meso-2,6-diaminopimelate + ATP = UDP-N-acetyl-alpha-D-muramoyl-L-alanyl-gamma-D-glutamyl-meso-2,6-diaminopimelate + ADP + phosphate + H(+). It functions in the pathway cell wall biogenesis; peptidoglycan biosynthesis. In terms of biological role, catalyzes the addition of meso-diaminopimelic acid to the nucleotide precursor UDP-N-acetylmuramoyl-L-alanyl-D-glutamate (UMAG) in the biosynthesis of bacterial cell-wall peptidoglycan. The protein is UDP-N-acetylmuramoyl-L-alanyl-D-glutamate--2,6-diaminopimelate ligase of Escherichia coli O6:H1 (strain CFT073 / ATCC 700928 / UPEC).